We begin with the raw amino-acid sequence, 266 residues long: Dolichol-phosphate mannosyltransferase subunit 1 (266 aa).

Residues 1-19 are compositionally biased toward low complexity; it reads MASPGASRGASAATAAAAS. Residues 1–31 are disordered; that stretch reads MASPGASRGASAATAAAASPRPPQGRSSRRD. Position 2 is an N-acetylalanine (A2). S3 is subject to Phosphoserine. 11 residues coordinate GDP-alpha-D-mannose: P38, Y40, E42, I69, D71, D124, A125, D126, R153, R240, and K246. D126 contacts Mg(2+). Residue D126 participates in Mn(2+) binding.

It belongs to the glycosyltransferase 2 family. Component of the dolichol-phosphate mannose (DPM) synthase complex composed of DPM1, DPM2 and DPM3; within the complex, directly interacts with DPM3. This interaction may stabilize DPM1. Mg(2+) is required as a cofactor. It depends on Mn(2+) as a cofactor. Requires Ca(2+) as cofactor.

The protein resides in the endoplasmic reticulum. The catalysed reaction is a di-trans,poly-cis-dolichyl phosphate + GDP-alpha-D-mannose = a di-trans,poly-cis-dolichyl beta-D-mannosyl phosphate + GDP. Its pathway is protein modification; protein glycosylation. Transfers mannose from GDP-mannose to dolichol monophosphate to form dolichol phosphate mannose (Dol-P-Man) which is the mannosyl donor in pathways leading to N-glycosylation, glycosyl phosphatidylinositol membrane anchoring, and O-mannosylation of proteins; catalytic subunit of the dolichol-phosphate mannose (DPM) synthase complex. This is Dolichol-phosphate mannosyltransferase subunit 1 (DPM1) from Cricetulus griseus (Chinese hamster).